The sequence spans 157 residues: Immediate-early protein ICP-18 (157 aa).

The polypeptide is Immediate-early protein ICP-18 (Frog virus 3 (isolate Goorha) (FV-3)).